A 245-amino-acid chain; its full sequence is Sec-independent protein translocase protein TatC (245 aa).

Helical transmembrane passes span 17 to 37 (FISV…RSYI), 73 to 93 (FFAA…KFVA), 107 to 127 (FVSF…FVVV), 159 to 179 (VVVA…FAKI), 191 to 207 (FRIA…FMTP), and 210 to 230 (VLSQ…SILI).

It belongs to the TatC family. In terms of assembly, the Tat system comprises two distinct complexes: a TatABC complex, containing multiple copies of TatA, TatB and TatC subunits, and a separate TatA complex, containing only TatA subunits. Substrates initially bind to the TatABC complex, which probably triggers association of the separate TatA complex to form the active translocon.

It is found in the cell inner membrane. Functionally, part of the twin-arginine translocation (Tat) system that transports large folded proteins containing a characteristic twin-arginine motif in their signal peptide across membranes. Together with TatB, TatC is part of a receptor directly interacting with Tat signal peptides. The polypeptide is Sec-independent protein translocase protein TatC (Campylobacter jejuni subsp. jejuni serotype O:2 (strain ATCC 700819 / NCTC 11168)).